We begin with the raw amino-acid sequence, 571 residues long: Urease subunit alpha (571 aa).

Ni(2+) is bound by residues His138, His140, and Lys221. An N6-carboxylysine modification is found at Lys221. A substrate-binding site is contributed by His223. Ni(2+) is bound by residues His250 and His276. Residue His324 is the Proton donor of the active site. A Ni(2+)-binding site is contributed by Asp364.

This sequence belongs to the metallo-dependent hydrolases superfamily. Urease alpha subunit family. In terms of assembly, heterotrimer of UreA (gamma), UreB (beta) and UreC (alpha) subunits. Three heterotrimers associate to form the active enzyme. Ni cation serves as cofactor. In terms of processing, carboxylation allows a single lysine to coordinate two nickel ions.

It is found in the cytoplasm. It carries out the reaction urea + 2 H2O + H(+) = hydrogencarbonate + 2 NH4(+). It participates in nitrogen metabolism; urea degradation; CO(2) and NH(3) from urea (urease route): step 1/1. The chain is Urease subunit alpha from Staphylococcus aureus (strain JH9).